The following is a 344-amino-acid chain: WW domain binding protein 1-like (344 aa).

A helical transmembrane segment spans residues 42–62; sequence LWWFWLVWTIIIILSCCCVCH. Disordered stretches follow at residues 132–250 and 302–321; these read LLPP…RFTG and CLSS…PRPP. The segment covering 145-173 has biased composition (low complexity); the sequence is PGADQPQGSQGAQSSPLSGPSRSSTRPPS. Serine 173 carries the post-translational modification Phosphoserine. Basic and acidic residues predominate over residues 212–228; it reads LDRDSECKEELLKDSSS.

It localises to the membrane. The protein is WW domain binding protein 1-like (Wbp1l) of Rattus norvegicus (Rat).